Here is a 141-residue protein sequence, read N- to C-terminus: Relaxin-3 (141 aa).

The first 24 residues, 1 to 24 (MAMLGLLLLASWALLGALGLQAEA), serve as a signal peptide directing secretion. 3 disulfide bridges follow: C34–C128, C46–C141, and C127–C132. The propeptide at 54–117 (ADILAHESLG…GSPGVVRGSR (64 aa)) is connecting peptide.

Belongs to the insulin family. Heterodimer of a B chain and an A chain linked by two disulfide bonds. In terms of tissue distribution, high expression in the brain localized to the pons/medulla with highest levels in pars ventromedialis of the dorsal tegmental nucleus. Significant expression is also detected in the spleen, thymus, lung, testis and ovary.

It localises to the secreted. In terms of biological role, may play a role in neuropeptide signaling processes. Ligand for LGR7, relaxin-3 receptor-1 and relaxin-3 receptor-2. In Mus musculus (Mouse), this protein is Relaxin-3 (Rln3).